The following is a 145-amino-acid chain: Small t antigen (145 aa).

The region spanning 6-82 (RLTELLCLPV…PEESGYATFE (77 aa)) is the J domain. Positions 58 to 80 (EGLRADETLEDSDPEPEESGYAT) are disordered. Over residues 65-75 (TLEDSDPEPEE) the composition is skewed to acidic residues.

As to quaternary structure, interacts with host PPP2R1A; the interaction inhibits PP2A activity.

It is found in the host cytoplasm. It localises to the host nucleus. Functionally, promotes efficient viral genome replication by accelerating both G1 and S phase progression of the cell cycle. The polypeptide is Small t antigen (Budgerigar fledgling disease virus (BFPyV)).